Reading from the N-terminus, the 307-residue chain is Potassium channel subfamily K member 7 (307 aa).

The Cytoplasmic segment spans residues 1 to 10 (MGSLKPWARY). The chain crosses the membrane as a helical span at residues 11-31 (LLLLMAHLLAMGLGAVVLQAL). The N-linked (GlcNAc...) asparagine glycan is linked to Asn-83. The pore-forming intramembrane region spans 92-118 (LPSALLFTASILTTTGYGHMAPLSSGG). Residues 120 to 140 (AFCVVYAALGLPASLALVAAL) form a helical membrane-spanning segment. Topologically, residues 141–172 (RHCLLPVFSRPGDWVAIRWQLAPAQAALLQAA) are cytoplasmic. The helical transmembrane segment at 173 to 193 (GLGLLVACVFMLLPALVLWGV) threads the bilayer. Residues 199 to 227 (LLEAIYFCFGSLSTIGLGDLLPAHGRGLH) constitute an intramembrane region (pore-forming). A helical membrane pass occupies residues 233–253 (LGQFALLGYLLLGLLAMLLAV). The Cytoplasmic segment spans residues 254–307 (ETFSELPQVRAMVKFFGPSGSRTDEDQDGILGQDELALSTVLPDAPVLGPTTPA).

The protein belongs to the two pore domain potassium channel (TC 1.A.1.8) family. As to quaternary structure, homodimer. Detected in embryo, eye, lung and liver. Weakly expressed in colon, testis, atria, kidney, intestine, bladder, uterus, ovary, salivary gland, thymus and brain stem. Not detected in brain, cerebellum, spinal cord, heart, ventricle, skeletal muscle, liver, placenta and pancreas. In the eye, highly expressed in the retinal ganglion cell layer and inner nuclear layer.

It is found in the membrane. In terms of biological role, probable potassium channel subunit. No channel activity observed in vitro as protein remains in the endoplasmic reticulum. May need to associate with an as yet unknown partner in order to reach the plasma membrane. The polypeptide is Potassium channel subfamily K member 7 (Kcnk7) (Mus musculus (Mouse)).